The chain runs to 644 residues: DNA mismatch repair protein MutL (644 aa).

Over residues 340–360 the composition is skewed to basic and acidic residues; that stretch reads KKEKDESVQEQFKFEHTKPRE. The segment at 340-425 is disordered; the sequence is KKEKDESVQE…ETVREEKEWT (86 aa). Residues 387–400 show a composition bias toward low complexity; sequence QLWQPPKQEWQPPQ. Positions 416-425 are enriched in basic and acidic residues; that stretch reads ETVREEKEWT.

It belongs to the DNA mismatch repair MutL/HexB family.

In terms of biological role, this protein is involved in the repair of mismatches in DNA. It is required for dam-dependent methyl-directed DNA mismatch repair. May act as a 'molecular matchmaker', a protein that promotes the formation of a stable complex between two or more DNA-binding proteins in an ATP-dependent manner without itself being part of a final effector complex. In Bacillus mycoides (strain KBAB4) (Bacillus weihenstephanensis), this protein is DNA mismatch repair protein MutL.